The chain runs to 286 residues: MSCVDQIVKTFADLTEGDREAAMRAFSMMMRTEPVRQTPAAKKKVNGFMSFRSYYSPLFSQLPQKERSPFMTILWQHDPFHNEWNFMCSVYSSIRTYLEQEKVTLQLWIHYRVRHLGVIIRDNYMASFGWNLVQLPNGTHDLERTALPLVQHNLQPMNGLCLFTKCLESGLPLANPHPVIAKLSDPSYDMIWFNKRPHRQQGHAGQTYNSELGVSALFPCNHAVAAAVDGITDLPLSHWLQQGDFGTEAGFSPQFETLLDSILENGNASINDPYNMALGMGVPMMG.

The alpha box DNA-binding region spans 40-95 (AAKKKVNGFMSFRSYYSPLFSQLPQKERSPFMTILWQHDPFHNEWNFMCSVYSSIR).

It belongs to the MATALPHA1 family.

The protein resides in the nucleus. Its function is as follows. Required for expression of the heterokaryon incompatibility and sexual functions. The protein is Mating type protein A-1 (MTA-1) of Neurospora africana.